The primary structure comprises 984 residues: ETLMDTRTATAELGWTANPPSGWEEVSGYDENLNTIRTYQVCNVFEPNQNNWLLTTFINRRGAHRIYTEMRFTVRDCSSLPNVPGSCKETFNLYYYETDSVIATKKSAFWTEAPYLKVDTIAADESFSQVDFGGRLMKGXXXXXXXXXXXXXXXXXXXXXXXXXXXXXXXXXFFKKCPSVVQNFAIFPETMTGAESTSLVTARGTCIPNAEEVDVPIKLYCNGDGEWMVPIGRCTCKAGYEPENNVACRACPAGTFKASQGAGLCARCPPNSRSSAEASPLCACRNGYFRADLDPPTAACTSVPSGPRNVISIVNETSIILEWNPPRETGGRDDVTYNIVCKKCRADRRACSRCDDNVEFVPRQLGLTETRVFISSLWAHTPYTFEIQAVNGVSNKSPFPPQHVSVNITTNQAAPSTVPIMHQVSATMRSITLSWPQPEQPNGIILDYELRYYEKLSRICTPDVSGTVGSRPAADHNEYNSSVARSQTNTARLEGLRPGMVYVVQVRARTVAGYGKYSGKMCFQTLTDDDYKSELREQLPLIAGSAAAGVVFIVSLVAISIVCSRKRAYSKEVVYSDKLQHYSTGRGSPGMKIYIDPFTYEDPNEAVREFAKEIDVSFVKIEEVIGAGEFGEVYKGRLKLPGKREIYVAIKTLKAGYSEKQRRDFLSEASIMGQFDHPNIIRLEGVVTKSRPVMIITEFMENGALDSFLRQNDGQFTVIQLVGMLRGIAAGMKYLAEMNYVHRDLAARNILVNSNLVCKVSDFGLSRYLQDDTSDPTYTSSLGGKIPVRWTAPEAIAYRKFTSASDVWSYGIVMWEVMSFGERPYWDMSNQDVINAIEQDYRLPPPMDCPAALHQLMLDCWQKDRNTRPRLAEIVNTLDKMIRNPASLKTVATITAVPSQPLLDRSIPDFTAFTSVEDWLSAVKMSQYRDNFLSAGFTSLQLVAQMTSEDLLRIGVTLAGHQKKILNSIQSMRVQMSQSPTSMA.

One can recognise an Eph LBD domain in the interval 1–182; the sequence is ETLMDTRTAT…FFKKCPSVVQ (182 aa). Residues 1 to 541 are Extracellular-facing; sequence ETLMDTRTAT…KSELREQLPL (541 aa). Fibronectin type-III domains are found at residues 303-413 and 414-528; these read VPSG…TNQA and APST…TLTD. Asn-315, Asn-407, and Asn-480 each carry an N-linked (GlcNAc...) asparagine glycan. The helical transmembrane segment at 542-562 threads the bilayer; the sequence is IAGSAAAGVVFIVSLVAISIV. Residues 563–984 are Cytoplasmic-facing; that stretch reads CSRKRAYSKE…QMSQSPTSMA (422 aa). The Protein kinase domain maps to 619–882; sequence VKIEEVIGAG…EIVNTLDKMI (264 aa). Residues 625-633 and Lys-651 each bind ATP; that span reads IGAGEFGEV. The active-site Proton acceptor is Asp-744. Positions 911–975 constitute an SAM domain; sequence TAFTSVEDWL…LNSIQSMRVQ (65 aa). Positions 982-984 match the PDZ-binding motif; sequence SMA.

The protein belongs to the protein kinase superfamily. Tyr protein kinase family. Ephrin receptor subfamily. As to quaternary structure, heterotetramer upon binding of the ligand. The heterotetramer is composed of an ephrin dimer and a receptor dimer. Oligomerization is probably required to induce biological responses. In terms of processing, phosphorylated. Autophosphorylation is stimulated by ligands. Expressed at high levels in the 10-day embryo, and in adult brain, lung, heart and skeletal muscle. Low levels of expression detected in all other adult tissues tested.

The protein localises to the cell membrane. It is found in the early endosome membrane. The protein resides in the cell projection. Its subcellular location is the dendrite. The catalysed reaction is L-tyrosyl-[protein] + ATP = O-phospho-L-tyrosyl-[protein] + ADP + H(+). Functionally, receptor tyrosine kinase which binds promiscuously transmembrane ephrin-B family ligands residing on adjacent cells, leading to contact-dependent bidirectional signaling into neighboring cells. The signaling pathway downstream of the receptor is referred to as forward signaling while the signaling pathway downstream of the ephrin ligand is referred to as reverse signaling. May play a role in axon guidance during nervous system development. May also play an important redundant role with other ephrin-B receptors in development and maturation of dendritic spines and synapse formation. More generally, may play a role in targeted cell migration and adhesion. Upon activation by ephrin-B ligands activates the MAPK/ERK and the JNK signaling cascades to regulate cell migration and adhesion respectively. The polypeptide is Ephrin type-B receptor 1 (EPHB1) (Gallus gallus (Chicken)).